Reading from the N-terminus, the 313-residue chain is Acetyl-coenzyme A carboxylase carboxyl transferase subunit beta (313 aa).

Residues 24–293 (LWIKCPDSGQ…LETASKSVQP (270 aa)) form the CoA carboxyltransferase N-terminal domain.

This sequence belongs to the AccD/PCCB family. As to quaternary structure, acetyl-CoA carboxylase is a heterohexamer composed of biotin carboxyl carrier protein (AccB), biotin carboxylase (AccC) and two subunits each of ACCase subunit alpha (AccA) and ACCase subunit beta (AccD).

It is found in the cytoplasm. The catalysed reaction is N(6)-carboxybiotinyl-L-lysyl-[protein] + acetyl-CoA = N(6)-biotinyl-L-lysyl-[protein] + malonyl-CoA. Its pathway is lipid metabolism; malonyl-CoA biosynthesis; malonyl-CoA from acetyl-CoA: step 1/1. Functionally, component of the acetyl coenzyme A carboxylase (ACC) complex. Biotin carboxylase (BC) catalyzes the carboxylation of biotin on its carrier protein (BCCP) and then the CO(2) group is transferred by the transcarboxylase to acetyl-CoA to form malonyl-CoA. The protein is Acetyl-coenzyme A carboxylase carboxyl transferase subunit beta of Bradyrhizobium diazoefficiens (strain JCM 10833 / BCRC 13528 / IAM 13628 / NBRC 14792 / USDA 110).